The following is a 241-amino-acid chain: Nicotinamide riboside kinase (241 aa).

21 to 29 is an ATP binding site; the sequence is GCSSSGKST. 2 residues coordinate Mg(2+): S28 and D47. D47 acts as the Proton acceptor in catalysis. Substrate contacts are provided by residues 47-50, 67-68, and D68; these read DDFY and WD. Residue R163 coordinates ATP. A substrate-binding site is contributed by R164. ATP-binding positions include R167, 167–169, and 213–215; these read RGG and DVQ. 169-170 contributes to the substrate binding site; sequence GY.

Belongs to the uridine kinase family. NRK subfamily.

It carries out the reaction beta-nicotinamide D-riboside + ATP = beta-nicotinamide D-ribonucleotide + ADP + H(+). The enzyme catalyses beta-D-ribosylnicotinate + ATP = nicotinate beta-D-ribonucleotide + ADP + H(+). Its pathway is cofactor biosynthesis; NAD(+) biosynthesis. Functionally, catalyzes the phosphorylation of nicotinamide riboside (NR) and nicotinic acid riboside (NaR) to form nicotinamide mononucleotide (NMN) and nicotinic acid mononucleotide (NaMN). The sequence is that of Nicotinamide riboside kinase (NRK1) from Eremothecium gossypii (strain ATCC 10895 / CBS 109.51 / FGSC 9923 / NRRL Y-1056) (Yeast).